A 292-amino-acid polypeptide reads, in one-letter code: Elongation factor Ts (292 aa).

An involved in Mg(2+) ion dislocation from EF-Tu region spans residues 82 to 85; it reads TDFV.

The protein belongs to the EF-Ts family.

Its subcellular location is the cytoplasm. Functionally, associates with the EF-Tu.GDP complex and induces the exchange of GDP to GTP. It remains bound to the aminoacyl-tRNA.EF-Tu.GTP complex up to the GTP hydrolysis stage on the ribosome. The sequence is that of Elongation factor Ts from Legionella pneumophila subsp. pneumophila (strain Philadelphia 1 / ATCC 33152 / DSM 7513).